We begin with the raw amino-acid sequence, 251 residues long: MGDSNFDDVLVLIPARMASTRLPGKPLADICGLPMIVQVAMRAKEAEIGRVVVAVDDPQVFDTVAAAGFEVVMTSKDHQSGSDRIFEALKKIDPDGKAKFIVNVQGDLPTIEPETVRAALRPLENEAVDIGTLTIEIDNEEDKTAPHIVKVIGSPISDNRLRGLYFTRATAPYGKGPLYHHIGLYAYRRAALERFVSLGPSTLERRESLEQLRALEAGMRIDAEIVDTVPLGVDTPADLEKARRILSARQN.

This sequence belongs to the KdsB family.

It localises to the cytoplasm. The enzyme catalyses 3-deoxy-alpha-D-manno-oct-2-ulosonate + CTP = CMP-3-deoxy-beta-D-manno-octulosonate + diphosphate. The protein operates within nucleotide-sugar biosynthesis; CMP-3-deoxy-D-manno-octulosonate biosynthesis; CMP-3-deoxy-D-manno-octulosonate from 3-deoxy-D-manno-octulosonate and CTP: step 1/1. Its pathway is bacterial outer membrane biogenesis; lipopolysaccharide biosynthesis. Its function is as follows. Activates KDO (a required 8-carbon sugar) for incorporation into bacterial lipopolysaccharide in Gram-negative bacteria. In Rhizobium etli (strain ATCC 51251 / DSM 11541 / JCM 21823 / NBRC 15573 / CFN 42), this protein is 3-deoxy-manno-octulosonate cytidylyltransferase.